The sequence spans 151 residues: Ubiquitin-conjugating enzyme E2-17 kDa (151 aa).

Residues 4-150 (PARRRLMRDF…VKACVEQSFI (147 aa)) enclose the UBC core domain. Residue Cys88 is the Glycyl thioester intermediate of the active site.

It belongs to the ubiquitin-conjugating enzyme family.

It localises to the nucleus. The catalysed reaction is S-ubiquitinyl-[E1 ubiquitin-activating enzyme]-L-cysteine + [E2 ubiquitin-conjugating enzyme]-L-cysteine = [E1 ubiquitin-activating enzyme]-L-cysteine + S-ubiquitinyl-[E2 ubiquitin-conjugating enzyme]-L-cysteine.. Its pathway is protein modification; protein ubiquitination. Functionally, E2 ubiquitin-conjugating enzyme that accepts ubiquitin from the ubiquitin-activating enzyme E1 and transfers it to a E3 ubiquitin-protein ligase. Required for postreplication repair of UV-damaged DNA. Involved in the negative regulation of the Ras/MAPK signaling pathway in the wing by acting with the putative E3 ligases poe, Kcmf1 and Ufd4 to mediate the ubiquitination and proteasomal degradation of rl/MAPK. Required for in mitophagy. The chain is Ubiquitin-conjugating enzyme E2-17 kDa from Drosophila melanogaster (Fruit fly).